Here is a 508-residue protein sequence, read N- to C-terminus: Lysine--tRNA ligase (508 aa).

Positions 418 and 425 each coordinate Mg(2+).

It belongs to the class-II aminoacyl-tRNA synthetase family. In terms of assembly, homodimer. It depends on Mg(2+) as a cofactor.

It is found in the cytoplasm. The enzyme catalyses tRNA(Lys) + L-lysine + ATP = L-lysyl-tRNA(Lys) + AMP + diphosphate. The protein is Lysine--tRNA ligase of Burkholderia thailandensis (strain ATCC 700388 / DSM 13276 / CCUG 48851 / CIP 106301 / E264).